A 695-amino-acid chain; its full sequence is Probable rhamnogalacturonate lyase C (695 aa).

The N-terminal stretch at 1-21 (MFLPSRKALAFLACLASHSVA) is a signal peptide. N-linked (GlcNAc...) asparagine glycans are attached at residues N28, N96, N118, N144, N199, N285, N532, and N638.

This sequence belongs to the polysaccharide lyase 4 family.

The protein localises to the secreted. It carries out the reaction Endotype eliminative cleavage of L-alpha-rhamnopyranosyl-(1-&gt;4)-alpha-D-galactopyranosyluronic acid bonds of rhamnogalacturonan I domains in ramified hairy regions of pectin leaving L-rhamnopyranose at the reducing end and 4-deoxy-4,5-unsaturated D-galactopyranosyluronic acid at the non-reducing end.. Pectinolytic enzymes consist of four classes of enzymes: pectin lyase, polygalacturonase, pectin methylesterase and rhamnogalacturonase. Degrades the rhamnogalacturonan I (RG-I) backbone of pectin. The chain is Probable rhamnogalacturonate lyase C (rglC) from Aspergillus oryzae (strain ATCC 42149 / RIB 40) (Yellow koji mold).